The chain runs to 265 residues: Cytochrome c oxidase subunit 3 (265 aa).

7 helical membrane passes run 16–36 (PWPISGSLGALATTVGGVMYM), 41–61 (GGATLLSLGLIFILYTMFVWW), 81–101 (GPRYGSISFIVSEVMFLFAFF), 137–157 (TPILLSSGAAVTWAHHAILAG), 162–182 (AVYALVATVSLALVFTGFQGM), 200–220 (FFLATGFHGFHVIIGTLFLII), and 245–265 (WHFVDVVRLFPFVSIYWWGGI).

The protein belongs to the cytochrome c oxidase subunit 3 family. Component of the cytochrome c oxidase (complex IV, CIV), a multisubunit enzyme composed of a catalytic core of 3 subunits and several supernumerary subunits. The complex exists as a monomer or a dimer and forms supercomplexes (SCs) in the inner mitochondrial membrane with ubiquinol-cytochrome c oxidoreductase (cytochrome b-c1 complex, complex III, CIII).

The protein localises to the mitochondrion inner membrane. It catalyses the reaction 4 Fe(II)-[cytochrome c] + O2 + 8 H(+)(in) = 4 Fe(III)-[cytochrome c] + 2 H2O + 4 H(+)(out). Functionally, component of the cytochrome c oxidase, the last enzyme in the mitochondrial electron transport chain which drives oxidative phosphorylation. The respiratory chain contains 3 multisubunit complexes succinate dehydrogenase (complex II, CII), ubiquinol-cytochrome c oxidoreductase (cytochrome b-c1 complex, complex III, CIII) and cytochrome c oxidase (complex IV, CIV), that cooperate to transfer electrons derived from NADH and succinate to molecular oxygen, creating an electrochemical gradient over the inner membrane that drives transmembrane transport and the ATP synthase. Cytochrome c oxidase is the component of the respiratory chain that catalyzes the reduction of oxygen to water. Electrons originating from reduced cytochrome c in the intermembrane space (IMS) are transferred via the dinuclear copper A center (CU(A)) of subunit 2 and heme A of subunit 1 to the active site in subunit 1, a binuclear center (BNC) formed by heme A3 and copper B (CU(B)). The BNC reduces molecular oxygen to 2 water molecules using 4 electrons from cytochrome c in the IMS and 4 protons from the mitochondrial matrix. In Vicia faba (Broad bean), this protein is Cytochrome c oxidase subunit 3 (COX3).